The chain runs to 163 residues: Nucleotide-binding protein YajQ (163 aa).

Belongs to the YajQ family.

Functionally, nucleotide-binding protein. This chain is Nucleotide-binding protein YajQ, found in Escherichia coli O81 (strain ED1a).